Reading from the N-terminus, the 599-residue chain is Elongation factor 4 (599 aa).

The tr-type G domain maps to 2–184 (KNIRNFSIIA…EIVAKIPAPK (183 aa)). Residues 14–19 (DHGKST) and 131–134 (NKID) each bind GTP.

This sequence belongs to the TRAFAC class translation factor GTPase superfamily. Classic translation factor GTPase family. LepA subfamily.

It localises to the cell inner membrane. It catalyses the reaction GTP + H2O = GDP + phosphate + H(+). In terms of biological role, required for accurate and efficient protein synthesis under certain stress conditions. May act as a fidelity factor of the translation reaction, by catalyzing a one-codon backward translocation of tRNAs on improperly translocated ribosomes. Back-translocation proceeds from a post-translocation (POST) complex to a pre-translocation (PRE) complex, thus giving elongation factor G a second chance to translocate the tRNAs correctly. Binds to ribosomes in a GTP-dependent manner. This Mannheimia succiniciproducens (strain KCTC 0769BP / MBEL55E) protein is Elongation factor 4.